The sequence spans 113 residues: UPF0122 protein Sez_1013 (113 aa).

This sequence belongs to the UPF0122 family.

Might take part in the signal recognition particle (SRP) pathway. This is inferred from the conservation of its genetic proximity to ftsY/ffh. May be a regulatory protein. The sequence is that of UPF0122 protein Sez_1013 from Streptococcus equi subsp. zooepidemicus (strain MGCS10565).